The primary structure comprises 294 residues: Phosphatidylserine decarboxylase proenzyme (294 aa).

Residues Asp-100, His-157, and Ser-261 each act as charge relay system; for autoendoproteolytic cleavage activity in the active site. Ser-261 functions as the Schiff-base intermediate with substrate; via pyruvic acid; for decarboxylase activity in the catalytic mechanism. At Ser-261 the chain carries Pyruvic acid (Ser); by autocatalysis.

Belongs to the phosphatidylserine decarboxylase family. PSD-B subfamily. Prokaryotic type I sub-subfamily. Heterodimer of a large membrane-associated beta subunit and a small pyruvoyl-containing alpha subunit. It depends on pyruvate as a cofactor. Is synthesized initially as an inactive proenzyme. Formation of the active enzyme involves a self-maturation process in which the active site pyruvoyl group is generated from an internal serine residue via an autocatalytic post-translational modification. Two non-identical subunits are generated from the proenzyme in this reaction, and the pyruvate is formed at the N-terminus of the alpha chain, which is derived from the carboxyl end of the proenzyme. The autoendoproteolytic cleavage occurs by a canonical serine protease mechanism, in which the side chain hydroxyl group of the serine supplies its oxygen atom to form the C-terminus of the beta chain, while the remainder of the serine residue undergoes an oxidative deamination to produce ammonia and the pyruvoyl prosthetic group on the alpha chain. During this reaction, the Ser that is part of the protease active site of the proenzyme becomes the pyruvoyl prosthetic group, which constitutes an essential element of the active site of the mature decarboxylase.

It localises to the cell membrane. The enzyme catalyses a 1,2-diacyl-sn-glycero-3-phospho-L-serine + H(+) = a 1,2-diacyl-sn-glycero-3-phosphoethanolamine + CO2. Its pathway is phospholipid metabolism; phosphatidylethanolamine biosynthesis; phosphatidylethanolamine from CDP-diacylglycerol: step 2/2. Its function is as follows. Catalyzes the formation of phosphatidylethanolamine (PtdEtn) from phosphatidylserine (PtdSer). This is Phosphatidylserine decarboxylase proenzyme from Histophilus somni (strain 2336) (Haemophilus somnus).